Here is an 82-residue protein sequence, read N- to C-terminus: MSDKIRTLQGRVTSNKMDKSITVAIERQVKHPIYGKYIKRTTKIHAHDETNQCNEGDLVAIRECRPLSKTKSWTLVEVVSKA.

This sequence belongs to the universal ribosomal protein uS17 family. In terms of assembly, part of the 30S ribosomal subunit.

Its function is as follows. One of the primary rRNA binding proteins, it binds specifically to the 5'-end of 16S ribosomal RNA. The chain is Small ribosomal subunit protein uS17 from Shewanella sp. (strain W3-18-1).